The sequence spans 392 residues: L-rhamnonate dehydratase (392 aa).

Substrate contacts are provided by His-22 and Arg-48. 3 residues coordinate Mg(2+): Asp-214, Glu-240, and Glu-268. His-318 (proton acceptor) is an active-site residue. Glu-338 contributes to the substrate binding site.

The protein belongs to the mandelate racemase/muconate lactonizing enzyme family. RhamD subfamily. Homooctamer; tetramer of dimers. Requires Mg(2+) as cofactor.

It carries out the reaction L-rhamnonate = 2-dehydro-3-deoxy-L-rhamnonate + H2O. In terms of biological role, catalyzes the dehydration of L-rhamnonate to 2-keto-3-deoxy-L-rhamnonate (KDR). The polypeptide is L-rhamnonate dehydratase (Burkholderia orbicola (strain MC0-3)).